A 184-amino-acid polypeptide reads, in one-letter code: dCTP deaminase (184 aa).

DCTP contacts are provided by residues 107 to 112, 131 to 133, Gln152, Tyr166, and Gln176; these read KSTYAR and TLE. The Proton donor/acceptor role is filled by Glu133.

It belongs to the dCTP deaminase family. Homotrimer.

The catalysed reaction is dCTP + H2O + H(+) = dUTP + NH4(+). It participates in pyrimidine metabolism; dUMP biosynthesis; dUMP from dCTP (dUTP route): step 1/2. Its function is as follows. Catalyzes the deamination of dCTP to dUTP. This is dCTP deaminase from Paramagnetospirillum magneticum (strain ATCC 700264 / AMB-1) (Magnetospirillum magneticum).